Reading from the N-terminus, the 334-residue chain is DNA-directed RNA polymerase subunit alpha (334 aa).

The tract at residues 1 to 234 (MQRSLNEFLT…QQLAVFVDFD (234 aa)) is alpha N-terminal domain (alpha-NTD). The tract at residues 248–334 (IDPILLRPVD…IRGDDRVLGG (87 aa)) is alpha C-terminal domain (alpha-CTD).

Belongs to the RNA polymerase alpha chain family. Homodimer. The RNAP catalytic core consists of 2 alpha, 1 beta, 1 beta' and 1 omega subunit. When a sigma factor is associated with the core the holoenzyme is formed, which can initiate transcription.

It catalyses the reaction RNA(n) + a ribonucleoside 5'-triphosphate = RNA(n+1) + diphosphate. Functionally, DNA-dependent RNA polymerase catalyzes the transcription of DNA into RNA using the four ribonucleoside triphosphates as substrates. In Hahella chejuensis (strain KCTC 2396), this protein is DNA-directed RNA polymerase subunit alpha.